Here is a 177-residue protein sequence, read N- to C-terminus: Phycocyanin PC645 beta subunit (177 aa).

A mesobiliverdin-binding site is contributed by Tyr-18. Positions 28, 35, and 39 each coordinate (2R,3E)-phycocyanobilin. 3 residues coordinate 15,16-dihydrobiliverdin: Cys-50, Asp-54, and Cys-61. The (2R,3E)-phycocyanobilin site is built by Asn-72, Arg-77, Cys-82, Arg-84, and Asp-85. Gln-148 contributes to the 15,16-dihydrobiliverdin binding site. Residues Pro-154, Gly-156, and Cys-158 each contribute to the (2R,3E)-phycocyanobilin site.

It belongs to the phycobiliprotein family. As to quaternary structure, heterotetramer of 2 different alpha chains and 2 identical beta chains which form 2 alpha-beta heterodimers within the heterotetramer. Contains two phycocyanobilin chromophores, one mesobiliverdin chromophore and one 15,16-dihydrobiliverdin chromophore with binding mediated by both the alpha and beta subunits.

It is found in the plastid. Its subcellular location is the chloroplast thylakoid membrane. Functionally, light-harvesting photosynthetic tetrapyrrole chromophore-protein from the phycobiliprotein complex. The sequence is that of Phycocyanin PC645 beta subunit from Chroomonas sp. (strain CCMP270).